The following is a 439-amino-acid chain: MDLLGDIVEKDTSDSVESNDNGTLSTNNCGTGFPELYKPKKISSWKERLREKRAQKKKTSGKDAEKQQTSTDAPLSEAKSIHNENIKVLQGMSDEQIVQEREDLYNSLDPKLIAKLLKNINKRAKDENNTPLFAEIEGASGTWVGGNKQGIYDLPPLDDEDVDVALEIRPMLGKDAKHVQFEEAGKEKDVEEEAKTNDDVDDIAPLDFQMAQCIDHMKNEELFKDVHFIKEESQNEINLEKLDINDPNFNDKLHEKYFPDLPKEVDKLKWMQPVQQKTDKNYIIEDVSECRFDFNGDLVPPTRQIDSTIHSGLHHHSDSPELAGYTIVELEHLARSTFPSQRCIAIQTLGRILYKLGQKSYYQLVPEIDADTYKEDGSISNVMDKIYSMFWDLIKDGKVIESLEISSDEKFTRNLSVRNYAIDALWLWKQGGGDFRTKK.

2 disordered regions span residues 1-35 and 49-79; these read MDLLGDIVEKDTSDSVESNDNGTLSTNNCGTGFPE and LREKRAQKKKTSGKDAEKQQTSTDAPLSEAK. Positions 15-30 are enriched in polar residues; the sequence is SVESNDNGTLSTNNCG.

This sequence belongs to the RPAP1 family.

The protein localises to the cytoplasm. Forms an interface between the RNA polymerase II enzyme and chaperone/scaffolding proteins, suggesting that it is required to connect RNA polymerase II to regulators of protein complex formation. The polypeptide is RNA polymerase II-associated protein RBA50 (RBA50) (Saccharomyces cerevisiae (strain ATCC 204508 / S288c) (Baker's yeast)).